A 556-amino-acid chain; its full sequence is MPVDLGQALGPLPFLAKAEDATFSASDATQQRELANPETARQLFRQFRYQVLSGPQETLRQLRKLCFQWLRPEVHTKEQILELLMLEQFLTILPGEIQMWVRKQCPGSGQEAVTLVESLKGEPQKLWHWISTQVLGQEIPFEKENLTHCPGDKLEPALEVEPSLEVAPQDLPLQNSSSATGELLSHGVKEESDMEPELALAASQLPARPEERPVRDQELGTAVLPPLQEEQWRHLDSTQKEQYWDLMLETYGKMVSGVAGISNSKPDLTNLAEYGEELVGLHLHGAEKMARLPCKEDRQENDKENLNLENHRDQGCLDVFCQASGEAPPQTALSDFFGESEPHRFGGDSVPEALENHQGEGTGAHLFPYERGSGKQPGQHIQSSSLGELTALWLEEKREASQKGQARSPMAQKLPTCRECGKTFYRNSQLVFHQRTHTGETYFHCHICKKAFLRSSDFVKHQRTHTGEKPCKCDYCGKGFSDFSGLRHHEKIHTGEKPYKCPLCEKSFIQRSNFNRHQRVHTGEKPYKCTHCGKQFSWSSSLDKHQRSHLGKMPCP.

An SCAN box domain is found at 41-123; the sequence is RQLFRQFRYQ…TLVESLKGEP (83 aa). The interval 169 to 195 is disordered; that stretch reads QDLPLQNSSSATGELLSHGVKEESDME. The 74-residue stretch at 218 to 291 folds into the KRAB domain; it reads ELGTAVLPPL…HLHGAEKMAR (74 aa). 5 consecutive C2H2-type zinc fingers follow at residues 415–437, 443–465, 471–493, 499–521, and 527–549; these read PTCR…QRTH, FHCH…QRTH, CKCD…EKIH, YKCP…QRVH, and YKCT…QRSH.

The protein belongs to the krueppel C2H2-type zinc-finger protein family.

The protein localises to the nucleus. Its function is as follows. May be involved in transcriptional regulation. This is Zinc finger protein 18 (Znf18) from Mus musculus (Mouse).